The chain runs to 293 residues: SAGA-associated factor 29 (293 aa).

Residues 3 to 88 (LVSADSRIAE…KALDKIAEIK (86 aa)) are a coiled coil. The region spanning 152-293 (GDYVAKPGDK…VVACKEPKKK (142 aa)) is the SGF29 C-terminal domain. Histone H3K4me3 N-terminus binding regions lie at residues 194–196 (DID) and 240–243 (QTTC). The histone H3K4me3 binding stretch occupies residues 264–266 (FED). Lys288 is modified (N6-acetyllysine).

It belongs to the SGF29 family. Interacts with dimethylated and trimethylated 'Lys-4' of histone H3 (H3K4me2 and H3K4me3), with a preference for the trimethylated form (H3K4me3). Component of some SAGA-type complexes. Component of the ADA2A-containing complex (ATAC), composed of KAT14, KAT2A, TADA2L, TADA3L, ZZ3, MBIP, WDR5, YEATS2, CCDC101 and DR1. Interacts with (methylated) CGAS. Interacts with TADA3L, GCN5L2, SUPT3H and MYC. As to expression, widely expressed with highest levels in testis. Highly expressed in hepatoma and other tumor cell lines.

It localises to the nucleus. Functionally, chromatin reader component of some histone acetyltransferase (HAT) SAGA-type complexes like the TFTC-HAT, ATAC or STAGA complexes. SGF29 specifically recognizes and binds methylated 'Lys-4' of histone H3 (H3K4me), with a preference for trimethylated form (H3K4me3). In the SAGA-type complexes, SGF29 is required to recruit complexes to H3K4me. Involved in the response to endoplasmic reticulum (ER) stress by recruiting the SAGA complex to H3K4me, thereby promoting histone H3 acetylation and cell survival. Also binds non-histone proteins that are methylated on Lys residues: specifically recognizes and binds CGAS monomethylated on 'Lys-491'. May be involved in MYC-mediated oncogenic transformation. The sequence is that of SAGA-associated factor 29 from Rattus norvegicus (Rat).